Here is a 600-residue protein sequence, read N- to C-terminus: MTIILHRSDFFEAILNHEGSSVAVVENESGASFCYSSLLNSVARAKEQLLAKTGKCDTSVSGERIAFLVESGYEYVVTLLTILACNAIAVPLAPSFPAPELRYIINNSEALALISSAKYVSKAEEVLAEGLDNTPLFCQLDGTRNISAIEEEVKLRDFSDEPRGGMMLFTSGTTARPKGVVLSQTNLTAQAKCLLEAWKYAPSDRLLHVLPLHHIHGTVNALLTPLLAGSSIEFMYPFNVNSVWTRLAAPFLENEQINGHSEKTNGAQKDETRVPISFFTAVPTIWSRMLKAHDSLSHDMQAAGKIAVSPNNLRLNISGSAALPKPIRDGWIQLTGGNVLLERYGMTEVGMALSCGLENTDRVDGSVGWPLPSVEARLMETDDETEIQRIIEHGAEIDAHSGKERIGEIQLRGPTVFTGYWRNPEATAKEFTTDGWFKTGDIAIRRQVPESGLGKSGSWAKGPAYFIQGRRSADIIKTGGEKVSALEVEREILALPEVDECAVVGLPSEAWGQKVAAVIVLSSKVGGSMSLQSLRSALKTRITAYKIPQDLEIVEFLPRNAMGKINKKELVKSVFGEVEKIRRRSIDLQTKRPVLNGQRG.

Residues T170–T174, H214, A321–L323, and E342–R343 contribute to the ATP site. The interval N241 to E342 is SBD1. Positions R343–Y420 are SBD2. A substrate-binding site is contributed by M346. 4 residues coordinate ATP: T347, D441, R471, and K564. K564 contributes to the oxalate binding site.

The protein belongs to the ATP-dependent AMP-binding enzyme family.

In terms of biological role, coA ligase; part of the Fusarium detoxification of benzoxazolinone cluster 2 (FDB2) involved in the degradation of benzoxazolinones produced by the host plant. Maize, wheat, and rye produce the 2 benzoxazinone phytoanticipins 2,4-dihy-droxy-7-methoxy-1,4-benzoxazin-3-one (DIMBOA) and 2,4-dihydroxy-1,4-benzoxazin-3-one (DIBOA) that, due to their inherent instability once released, spontaneously degrade to the more stable corresponding benzoxazolinones, 6-methoxy-2-benzoxazolinone (MBOA) and 2-benzoxazolinone (BOA), respectively. The first step in the detoxification of benzoxazolinones involves the hydrolysis of the cyclic ester bond of benzoxazolinones by the FDB1 cluster gamma-lactamase MBL1 to aminophenols. MBL1 is able to convert BOA into 2-aminophenol (2-AP), as well as MBOA into 5-methoxy-2-aminophenol (2-AMP). The FDB2 cluster N-malonyltransferase FDB2/NAT1 then metabolizes aminophenols via N-malonylation to non-toxic malonamic acids. FDB2/NAT1 converts 2-AP into N-(2-hydroxyphenyl) malonamic acid (HPMA) and 2-AMP into N-(2-hydroxy-4-methoxyphenyl) malonamic acid (HMPMA). The duplicated dienlactone hydrolases DLH1 and DLH2 may provide redundant function for hydrolyzing the lactone moiety in the BOA molecule. The roles of the amidases an other enzymes encoded by the 2 FDB clusters have not been identified so far. In Gibberella moniliformis (strain M3125 / FGSC 7600) (Maize ear and stalk rot fungus), this protein is CoA ligase FVEG_12633.